The sequence spans 281 residues: Phosphonates import ATP-binding protein PhnC (281 aa).

An ABC transporter domain is found at 5–253 (IEVCGLTKSF…MLRDLYGTEA (249 aa)). 38–45 (GASGSGKS) contributes to the ATP binding site.

It belongs to the ABC transporter superfamily. Phosphonates importer (TC 3.A.1.9.1) family. In terms of assembly, the complex is composed of two ATP-binding proteins (PhnC), two transmembrane proteins (PhnE) and a solute-binding protein (PhnD).

It localises to the cell inner membrane. It carries out the reaction phosphonate(out) + ATP + H2O = phosphonate(in) + ADP + phosphate + H(+). In terms of biological role, part of the ABC transporter complex PhnCDE involved in phosphonates import. Responsible for energy coupling to the transport system. This is Phosphonates import ATP-binding protein PhnC from Cupriavidus pinatubonensis (strain JMP 134 / LMG 1197) (Cupriavidus necator (strain JMP 134)).